The sequence spans 1133 residues: DNA-directed RNA polymerase III subunit RPC2 (1133 aa).

K186 serves as a coordination point for RNA. R195 is a DNA binding site. R213 lines the RNA pocket. D432 contacts DNA. RNA is bound by residues Q438 and Q692. Residue D753 coordinates Mg(2+). Positions 896, 904, and 1019 each coordinate RNA. 3 residues coordinate DNA: R1039, S1040, and R1046. C1080, C1083, C1092, and C1095 together coordinate Zn(2+). The segment at 1080–1095 (CGQCGLLGYSGWCHYC) adopts a C4-type zinc-finger fold.

The protein belongs to the RNA polymerase beta chain family. Component of the RNA polymerase III (Pol III) complex consisting of 17 subunits: a ten-subunit catalytic core composed of POLR3A/RPC1, POLR3B/RPC2, POLR1C/RPAC1, POLR1D/RPAC2, POLR3K/RPC10, POLR2E/RPABC1, POLR2F/RPABC2, POLR2H/RPABC3, POLR2K/RPABC4 and POLR2L/RPABC5; a mobile stalk composed of two subunits POLR3H/RPC8 and CRCP/RPC9, protruding from the core and functioning primarily in transcription initiation; and additional subunits homologous to general transcription factors of the RNA polymerase II machinery, POLR3C/RPC3-POLR3F/RPC6-POLR3G/RPC7 heterotrimer required for transcription initiation and POLR3D/RPC4-POLR3E/RPC5 heterodimer involved in both transcription initiation and termination. Mg(2+) serves as cofactor.

It is found in the nucleus. It localises to the cytoplasm. The protein resides in the cytosol. The enzyme catalyses RNA(n) + a ribonucleoside 5'-triphosphate = RNA(n+1) + diphosphate. Catalytic core component of RNA polymerase III (Pol III), a DNA-dependent RNA polymerase which synthesizes small non-coding RNAs using the four ribonucleoside triphosphates as substrates. Synthesizes 5S rRNA, snRNAs, tRNAs and miRNAs from at least 500 distinct genomic loci. Pol III-mediated transcription cycle proceeds through transcription initiation, transcription elongation and transcription termination stages. During transcription initiation, Pol III is recruited to DNA promoters type I, II or III with the help of general transcription factors and other specific initiation factors. Once the polymerase has escaped from the promoter it enters the elongation phase during which RNA is actively polymerized, based on complementarity with the template DNA strand. Transcription termination involves the release of the RNA transcript and polymerase from the DNA. Forms Pol III active center together with the largest subunit POLR3A/RPC1. A single-stranded DNA template strand of the promoter is positioned within the central active site cleft of Pol III. Appends one nucleotide at a time to the 3' end of the nascent RNA, with POLR3A/RPC1 contributing a Mg(2+)-coordinating DxDGD motif, and POLR3B/RPC2 participating in the coordination of a second Mg(2+) ion and providing lysine residues believed to facilitate Watson-Crick base pairing between the incoming nucleotide and template base. Typically, Mg(2+) ions direct a 5' nucleoside triphosphate to form a phosphodiester bond with the 3' hydroxyl of the preceding nucleotide of the nascent RNA, with the elimination of pyrophosphate. Pol III plays a key role in sensing and limiting infection by intracellular bacteria and DNA viruses. Acts as a nuclear and cytosolic DNA sensor involved in innate immune response. Can sense non-self dsDNA that serves as template for transcription into dsRNA. The non-self RNA polymerase III transcripts, such as Epstein-Barr virus-encoded RNAs (EBERs) induce type I interferon and NF-kappa-B through the RIG-I pathway. The protein is DNA-directed RNA polymerase III subunit RPC2 of Homo sapiens (Human).